The primary structure comprises 230 residues: NAD(P)H-hydrate epimerase (230 aa).

Residues 11–218 (AIAVDQELFN…ALQRKYELNL (208 aa)) form the YjeF N-terminal domain. Residue 61-65 (NNGGD) participates in (6S)-NADPHX binding. 2 residues coordinate K(+): Asn-62 and Asp-126. (6S)-NADPHX contacts are provided by residues 130-136 (GFSFKPP) and Asp-159. Ser-162 contacts K(+).

It belongs to the NnrE/AIBP family. The cofactor is K(+).

It carries out the reaction (6R)-NADHX = (6S)-NADHX. It catalyses the reaction (6R)-NADPHX = (6S)-NADPHX. Its function is as follows. Catalyzes the epimerization of the S- and R-forms of NAD(P)HX, a damaged form of NAD(P)H that is a result of enzymatic or heat-dependent hydration. This is a prerequisite for the S-specific NAD(P)H-hydrate dehydratase to allow the repair of both epimers of NAD(P)HX. This Drosophila sechellia (Fruit fly) protein is NAD(P)H-hydrate epimerase.